The primary structure comprises 164 residues: UPF0304 protein YfbU (164 aa).

The protein belongs to the UPF0304 family.

The chain is UPF0304 protein YfbU from Escherichia coli O127:H6 (strain E2348/69 / EPEC).